The following is a 60-amino-acid chain: UPF0434 protein Aave_2563 (60 aa).

This sequence belongs to the UPF0434 family.

The sequence is that of UPF0434 protein Aave_2563 from Paracidovorax citrulli (strain AAC00-1) (Acidovorax citrulli).